Reading from the N-terminus, the 225-residue chain is UPF0758 protein Shal_0429 (225 aa).

The 123-residue stretch at 102 to 224 (ILSDPDLTRD…IVSFAERGWI (123 aa)) folds into the MPN domain. Residues His-173, His-175, and Asp-186 each coordinate Zn(2+). The JAMM motif motif lies at 173–186 (HNHPSGIAEPSTAD).

The protein belongs to the UPF0758 family.

This is UPF0758 protein Shal_0429 from Shewanella halifaxensis (strain HAW-EB4).